Here is a 95-residue protein sequence, read N- to C-terminus: Aspartyl/glutamyl-tRNA(Asn/Gln) amidotransferase subunit C (95 aa).

Belongs to the GatC family. As to quaternary structure, heterotrimer of A, B and C subunits.

It catalyses the reaction L-glutamyl-tRNA(Gln) + L-glutamine + ATP + H2O = L-glutaminyl-tRNA(Gln) + L-glutamate + ADP + phosphate + H(+). The catalysed reaction is L-aspartyl-tRNA(Asn) + L-glutamine + ATP + H2O = L-asparaginyl-tRNA(Asn) + L-glutamate + ADP + phosphate + 2 H(+). Functionally, allows the formation of correctly charged Asn-tRNA(Asn) or Gln-tRNA(Gln) through the transamidation of misacylated Asp-tRNA(Asn) or Glu-tRNA(Gln) in organisms which lack either or both of asparaginyl-tRNA or glutaminyl-tRNA synthetases. The reaction takes place in the presence of glutamine and ATP through an activated phospho-Asp-tRNA(Asn) or phospho-Glu-tRNA(Gln). The chain is Aspartyl/glutamyl-tRNA(Asn/Gln) amidotransferase subunit C from Methylococcus capsulatus (strain ATCC 33009 / NCIMB 11132 / Bath).